We begin with the raw amino-acid sequence, 257 residues long: Probable enoyl-CoA hydratase echA8 (257 aa).

The protein belongs to the enoyl-CoA hydratase/isomerase family.

It catalyses the reaction a (3S)-3-hydroxyacyl-CoA = a (2E)-enoyl-CoA + H2O. The catalysed reaction is a 4-saturated-(3S)-3-hydroxyacyl-CoA = a (3E)-enoyl-CoA + H2O. In terms of biological role, could possibly oxidize fatty acids using specific components. This chain is Probable enoyl-CoA hydratase echA8 (echA8), found in Mycobacterium tuberculosis (strain CDC 1551 / Oshkosh).